The following is a 459-amino-acid chain: Putrescine aminotransferase (459 aa).

Pyridoxal 5'-phosphate contacts are provided by residues 150 to 151 (GT) and Q274. At K300 the chain carries N6-(pyridoxal phosphate)lysine. Pyridoxal 5'-phosphate is bound at residue T332.

Belongs to the class-III pyridoxal-phosphate-dependent aminotransferase family. Putrescine aminotransferase subfamily. The cofactor is pyridoxal 5'-phosphate.

The enzyme catalyses an alkane-alpha,omega-diamine + 2-oxoglutarate = an omega-aminoaldehyde + L-glutamate. It carries out the reaction putrescine + 2-oxoglutarate = 1-pyrroline + L-glutamate + H2O. It catalyses the reaction cadaverine + 2-oxoglutarate = 5-aminopentanal + L-glutamate. The protein operates within amine and polyamine degradation; putrescine degradation; 4-aminobutanal from putrescine (transaminase route): step 1/1. Its function is as follows. Catalyzes the aminotransferase reaction from putrescine to 2-oxoglutarate, leading to glutamate and 4-aminobutanal, which spontaneously cyclizes to form 1-pyrroline. This is the first step in one of two pathways for putrescine degradation, where putrescine is converted into 4-aminobutanoate (gamma-aminobutyrate or GABA) via 4-aminobutanal. Also functions as a cadaverine transaminase in a a L-lysine degradation pathway to succinate that proceeds via cadaverine, glutarate and L-2-hydroxyglutarate. This chain is Putrescine aminotransferase, found in Escherichia fergusonii (strain ATCC 35469 / DSM 13698 / CCUG 18766 / IAM 14443 / JCM 21226 / LMG 7866 / NBRC 102419 / NCTC 12128 / CDC 0568-73).